Consider the following 247-residue polypeptide: Acetate transporter protein patA (247 aa).

N-linked (GlcNAc...) asparagine glycosylation occurs at Asn-20. Transmembrane regions (helical) follow at residues 37 to 57 (PPIT…AIAF), 71 to 91 (AITN…LVLV), 106 to 126 (VFGG…PAFG), 141 to 161 (ALGY…IAAM), 169 to 189 (AMLG…FAMA), and 202 to 222 (AAGA…AHLM).

This sequence belongs to the acetate uptake transporter (AceTr) (TC 2.A.96) family.

It is found in the endoplasmic reticulum membrane. The protein operates within mycotoxin biosynthesis; patulin biosynthesis. Functionally, acetate transporter protein; part of the gene cluster that mediates the biosynthesis of patulin, an acetate-derived tetraketide mycotoxin produced by several fungal species that shows antimicrobial properties against several bacteria. May be involved in the uptake of acetate, a substrate for the synthesis of 6-methylsalicylic acid by the polyketide synthase patK. This Aspergillus clavatus (strain ATCC 1007 / CBS 513.65 / DSM 816 / NCTC 3887 / NRRL 1 / QM 1276 / 107) protein is Acetate transporter protein patA.